A 270-amino-acid chain; its full sequence is NAD kinase (270 aa).

The Proton acceptor role is filled by aspartate 49. NAD(+)-binding positions include aspartate 49–glycine 50, arginine 54, asparagine 126–glutamate 127, arginine 152, aspartate 154, threonine 165–serine 170, alanine 189, and glutamine 227.

Belongs to the NAD kinase family. A divalent metal cation serves as cofactor.

The protein localises to the cytoplasm. It carries out the reaction NAD(+) + ATP = ADP + NADP(+) + H(+). Functionally, involved in the regulation of the intracellular balance of NAD and NADP, and is a key enzyme in the biosynthesis of NADP. Catalyzes specifically the phosphorylation on 2'-hydroxyl of the adenosine moiety of NAD to yield NADP. The chain is NAD kinase from Lactococcus lactis subsp. cremoris (strain MG1363).